The chain runs to 260 residues: CD27 antigen (260 aa).

Residues 1–19 (MARPHPWWLCVLGTLVGLS) form the signal peptide. The Extracellular portion of the chain corresponds to 20-191 (ATPAPKSCPE…RSLCSSDFIR (172 aa)). TNFR-Cys repeat units follow at residues 26–63 (SCPE…AQCD), 64–104 (PCIP…NAEC), and 105–141 (ACRN…PHPQ). 8 disulfide bridges follow: cysteine 27/cysteine 39, cysteine 40/cysteine 53, cysteine 43/cysteine 62, cysteine 65/cysteine 81, cysteine 84/cysteine 96, cysteine 87/cysteine 104, cysteine 106/cysteine 120, and cysteine 112/cysteine 117. The N-linked (GlcNAc...) asparagine glycan is linked to asparagine 95. The O-linked (GalNAc...) serine glycan is linked to serine 127. A helical transmembrane segment spans residues 192–212 (ILVIFSGMFLVFTLAGALFLH). The Cytoplasmic segment spans residues 213 to 260 (QRRKYRSNKGESPVEPAEPCHYSCPREEEGSTIPIQEDYRKPEPACSP). Phosphoserine is present on serine 219. Residues 219–260 (SNKGESPVEPAEPCHYSCPREEEGSTIPIQEDYRKPEPACSP) form a disordered region. Basic and acidic residues predominate over residues 249 to 260 (EDYRKPEPACSP).

In terms of assembly, homodimer. Interacts with SIVA1; may play a role in apoptosis through association with SIVA1. Interacts with TRAF2. Interacts ith PTPN6. In terms of processing, phosphorylated. N-glycosylated. Post-translationally, O-glycosylated with core 1 or possibly core 8 glycans. As to expression, found in most T-lymphocytes.

It localises to the cell membrane. Functionally, costimulatory immune-checkpoint receptor expressed at the surface of T-cells, NK-cells and B-cells which binds to and is activated by its ligand CD70/CD27L expressed by B-cells. The CD70-CD27 signaling pathway mediates antigen-specific T-cell activation and expansion which in turn provides immune surveillance of B-cells. Mechanistically, CD70 ligation activates the TRAF2-PTPN6 axis that subsequently inhibits LCK phosphorylation to promote phenotypic and transcriptional adaptations of T-cell memory. In addition, activation by CD70 on early progenitor cells provides a negative feedback signal to leukocyte differentiation during immune activation and thus modulates hematopoiesis. Negatively regulates the function of Th2 lymphocytes in the adipose tissue. This Homo sapiens (Human) protein is CD27 antigen.